We begin with the raw amino-acid sequence, 1569 residues long: Zinc finger protein GLI3 (1569 aa).

Polar residues-rich tracts occupy residues methionine 1–alanine 10 and alanine 416–glycine 432. Disordered stretches follow at residues methionine 1–serine 79 and serine 414–aspartate 461. 5 C2H2-type zinc fingers span residues threonine 485–histidine 510, phenylalanine 518–histidine 545, histidine 551–histidine 575, tyrosine 581–histidine 606, and tyrosine 612–histidine 637. Disordered stretches follow at residues aspartate 625–serine 731, serine 899–proline 921, proline 1202–aspartate 1228, and serine 1335–glutamine 1364. Basic and acidic residues predominate over residues histidine 637 to proline 653. Residues serine 663 to glycine 676 are compositionally biased toward polar residues. Positions histidine 678–lysine 704 are enriched in basic and acidic residues. The span at proline 705–serine 731 shows a compositional bias: polar residues. The span at serine 1335 to threonine 1350 shows a compositional bias: low complexity. Residues serine 1352 to glutamine 1364 are compositionally biased toward polar residues.

The protein belongs to the GLI C2H2-type zinc-finger protein family. In terms of processing, phosphorylation is essential for its proteolytic processing. The repressor form (GLI3R), a C-terminally truncated form is generated from the full-length GLI3 protein (GLI3FL) through proteolytic processing.

Its subcellular location is the nucleus. The protein localises to the cytoplasm. Has a dual function as a transcriptional activator and a repressor of the sonic hedgehog (Shh) pathway, and may play a role in limb development. May bind to the minimal GLI-consensus sequence 5'-GGGTGGTC-3'. Has an essential role in the early embryonic patterning of mesoderm and neuroectoderm. The polypeptide is Zinc finger protein GLI3 (gli3) (Xenopus laevis (African clawed frog)).